The sequence spans 308 residues: UDP-N-acetylenolpyruvoylglucosamine reductase (308 aa).

The FAD-binding PCMH-type domain maps to 22 to 185 (RVGGPADWLF…TEATFRAEAG (164 aa)). The active site involves Arg165. Over residues 197-211 (QIARRDSSQPTKERS) the composition is skewed to basic and acidic residues. Residues 197 to 228 (QIARRDSSQPTKERSAGSTFRNPAGFSSTGRA) form a disordered region. The segment covering 212-226 (AGSTFRNPAGFSSTG) has biased composition (polar residues). The Proton donor role is filled by Ser214. Glu296 is an active-site residue.

It belongs to the MurB family. It depends on FAD as a cofactor.

The protein resides in the cytoplasm. It catalyses the reaction UDP-N-acetyl-alpha-D-muramate + NADP(+) = UDP-N-acetyl-3-O-(1-carboxyvinyl)-alpha-D-glucosamine + NADPH + H(+). It functions in the pathway cell wall biogenesis; peptidoglycan biosynthesis. Its function is as follows. Cell wall formation. The protein is UDP-N-acetylenolpyruvoylglucosamine reductase of Cereibacter sphaeroides (strain ATCC 17023 / DSM 158 / JCM 6121 / CCUG 31486 / LMG 2827 / NBRC 12203 / NCIMB 8253 / ATH 2.4.1.) (Rhodobacter sphaeroides).